We begin with the raw amino-acid sequence, 100 residues long: Sweet protein mabinlin-4 (100 aa).

4 disulfides stabilise this stretch: C4–C49, C17–C38, C39–C87, and C51–C95.

Belongs to the 2S seed storage albumins family. In terms of assembly, heterodimer of a small A and a large B chain linked by disulfide bonds.

In terms of biological role, heat stable 2S seed storage protein having sweetness-inducing activity. The sequence is that of Sweet protein mabinlin-4 from Capparis masaikai (Mabinlang).